A 217-amino-acid polypeptide reads, in one-letter code: Pyrrolidone-carboxylate peptidase (217 aa).

Residues E78, C141, and H168 contribute to the active site.

It belongs to the peptidase C15 family. Homotetramer.

The protein resides in the cytoplasm. It carries out the reaction Release of an N-terminal pyroglutamyl group from a polypeptide, the second amino acid generally not being Pro.. In terms of biological role, removes 5-oxoproline from various penultimate amino acid residues except L-proline. The sequence is that of Pyrrolidone-carboxylate peptidase from Treponema denticola (strain ATCC 35405 / DSM 14222 / CIP 103919 / JCM 8153 / KCTC 15104).